The chain runs to 741 residues: Beta-galactosidase 10 (741 aa).

Residues 1-29 (MNRVTTESIASTAILVVMVFLFSWRSIEA) form the signal peptide. A glycan (N-linked (GlcNAc...) asparagine) is linked at Asn-31. The Proton donor role is filled by Glu-188. Catalysis depends on Glu-257, which acts as the Nucleophile. N-linked (GlcNAc...) asparagine glycosylation is found at Asn-358, Asn-396, Asn-469, Asn-525, and Asn-583.

It belongs to the glycosyl hydrolase 35 family. Ubiquitous.

The protein localises to the secreted. It is found in the extracellular space. Its subcellular location is the apoplast. The catalysed reaction is Hydrolysis of terminal non-reducing beta-D-galactose residues in beta-D-galactosides.. This Arabidopsis thaliana (Mouse-ear cress) protein is Beta-galactosidase 10 (BGAL10).